The following is a 410-amino-acid chain: Dipeptidase 1 (410 aa).

Positions 1 to 16 (MWTSWWLWPLVAVCTA) are cleaved as a signal peptide. The Zn(2+) site is built by histidine 36 and aspartate 38. N-linked (GlcNAc...) asparagine glycosylation is present at asparagine 57. Residues cysteine 87 and cysteine 170 are joined by a disulfide bond. Residue glutamate 141 participates in Zn(2+) binding. Histidine 168 provides a ligand contact to substrate. Zn(2+) is bound by residues histidine 214 and histidine 235. An intrachain disulfide couples cysteine 242 to cysteine 274. The substrate site is built by arginine 246 and aspartate 304. Serine 384 carries the GPI-anchor amidated serine lipid modification. The propeptide at 385–410 (EAPSLHRRPGALLASLSLLLLSLGLL) is removed in mature form.

This sequence belongs to the metallo-dependent hydrolases superfamily. Peptidase M19 family. As to quaternary structure, homodimer; disulfide-linked. The cofactor is Zn(2+).

It is found in the apical cell membrane. The protein localises to the cell projection. The protein resides in the microvillus membrane. The catalysed reaction is an L-aminoacyl-L-amino acid + H2O = 2 an L-alpha-amino acid. The enzyme catalyses leukotriene D4 + H2O = leukotriene E4 + glycine. It catalyses the reaction L-cystine-bis-glycine + 2 H2O = L-cystine + 2 glycine. It carries out the reaction a beta-lactam + H2O = a substituted beta-amino acid. The catalysed reaction is glycyldehydrophenylalanine + H2O = 2,3-didehydrophenylalanine + glycine. Its activity is regulated as follows. Inhibited by L-penicillamine. Beta-lactamase activity is inhibited by cilastatin. Its function is as follows. Hydrolyzes a wide range of dipeptides including the conversion of leukotriene D4 to leukotriene E4. Hydrolyzes cystinyl-bis-glycine (cys-bis-gly) formed during glutathione degradation. Also possesses beta lactamase activity and hydrolytically inactivates beta-lactam antibiotics. In terms of biological role, independently of its dipeptidase activity, acts as an adhesion receptor for neutrophil recruitment from bloodstream into inflamed lungs and liver. The protein is Dipeptidase 1 (DPEP1) of Oryctolagus cuniculus (Rabbit).